Here is an 831-residue protein sequence, read N- to C-terminus: von Willebrand factor A domain-containing protein DDB_G0285981 (831 aa).

The 129-residue stretch at 60-188 (RDTFGLKTFS…NVTIHLTIIS (129 aa)) folds into the VIT domain. In terms of domain architecture, VWFA spans 312–480 (EFIFLIDCSG…NFEEQVMKLV (169 aa)).

The polypeptide is von Willebrand factor A domain-containing protein DDB_G0285981 (Dictyostelium discoideum (Social amoeba)).